We begin with the raw amino-acid sequence, 605 residues long: DNA primase (605 aa).

A CHC2-type zinc finger spans residues 38–62 (CPFHDEKTPSFTVSEDKQICHCFGC). The Toprim domain occupies 260 to 341 (DEIVLLEGFM…NVFVIQLPSG (82 aa)). 3 residues coordinate Mg(2+): Glu-266, Asp-310, and Asp-312.

Belongs to the DnaG primase family. Monomer. Interacts with DnaB. The cofactor is Zn(2+). Requires Mg(2+) as cofactor.

It carries out the reaction ssDNA + n NTP = ssDNA/pppN(pN)n-1 hybrid + (n-1) diphosphate.. RNA polymerase that catalyzes the synthesis of short RNA molecules used as primers for DNA polymerase during DNA replication. In Staphylococcus aureus (strain Mu50 / ATCC 700699), this protein is DNA primase.